A 309-amino-acid polypeptide reads, in one-letter code: Homoserine kinase (309 aa).

91–101 (PIGSGLGSSAC) is a binding site for ATP.

This sequence belongs to the GHMP kinase family. Homoserine kinase subfamily.

The protein localises to the cytoplasm. The enzyme catalyses L-homoserine + ATP = O-phospho-L-homoserine + ADP + H(+). Its pathway is amino-acid biosynthesis; L-threonine biosynthesis; L-threonine from L-aspartate: step 4/5. In terms of biological role, catalyzes the ATP-dependent phosphorylation of L-homoserine to L-homoserine phosphate. In Salmonella paratyphi B (strain ATCC BAA-1250 / SPB7), this protein is Homoserine kinase.